The primary structure comprises 500 residues: Cytochrome P450 2D26 (500 aa).

S249 bears the Phosphoserine mark. C446 lines the heme pocket.

This sequence belongs to the cytochrome P450 family. Heme is required as a cofactor.

It localises to the endoplasmic reticulum membrane. Its subcellular location is the microsome membrane. It catalyses the reaction an organic molecule + reduced [NADPH--hemoprotein reductase] + O2 = an alcohol + oxidized [NADPH--hemoprotein reductase] + H2O + H(+). Cytochromes P450 are a group of heme-thiolate monooxygenases. In liver microsomes, this enzyme is involved in an NADPH-dependent electron transport pathway. It oxidizes a variety of structurally unrelated compounds, including steroids, fatty acids, and xenobiotics. This is Cytochrome P450 2D26 (Cyp2d26) from Rattus norvegicus (Rat).